The chain runs to 280 residues: Lipase chaperone (280 aa).

The helical transmembrane segment at 5–22 (ALTIITIALGSLGAVYFL) threads the bilayer.

The protein belongs to the lipase chaperone family.

The protein localises to the cell inner membrane. In terms of biological role, may be involved in the folding of the extracellular lipase during its passage through the periplasm. The sequence is that of Lipase chaperone (lifO) from Vibrio vulnificus (strain CMCP6).